The primary structure comprises 229 residues: ATP-dependent dethiobiotin synthetase BioD (229 aa).

12–17 contacts ATP; sequence GAGKTI. A Mg(2+)-binding site is contributed by T16. Residue K38 is part of the active site. ATP is bound by residues D46, 105–108, and 165–166; these read EGVG and SE. Mg(2+) is bound by residues D46 and E105.

This sequence belongs to the dethiobiotin synthetase family. Homodimer. It depends on Mg(2+) as a cofactor.

Its subcellular location is the cytoplasm. It carries out the reaction (7R,8S)-7,8-diammoniononanoate + CO2 + ATP = (4R,5S)-dethiobiotin + ADP + phosphate + 3 H(+). The enzyme catalyses (7R,8S)-8-amino-7-(carboxyamino)nonanoate + ATP = (4R,5S)-dethiobiotin + ADP + phosphate + H(+). It functions in the pathway cofactor biosynthesis; biotin biosynthesis; biotin from 7,8-diaminononanoate: step 1/2. In terms of biological role, catalyzes a mechanistically unusual reaction, the ATP-dependent insertion of CO2 between the N7 and N8 nitrogen atoms of 7,8-diaminopelargonic acid (DAPA, also called 7,8-diammoniononanoate) to form a ureido ring. This cyanobacterium does not encode bioA (which catalyzes the formation of the precursor for this reaction in the cannonical pathway), instead it encodes bioU, which replaces bioA and also performs the first half of the cannonical BioD reaction. Thus in this organism BioD has a different substrate. The sequence is that of ATP-dependent dethiobiotin synthetase BioD from Gloeobacter violaceus (strain ATCC 29082 / PCC 7421).